The chain runs to 141 residues: Hemoglobin subunit alpha (141 aa).

The Globin domain occupies 1 to 141 (VLSSADKANI…VSTVLTSKYR (141 aa)). A Phosphoserine modification is found at serine 3. N6-succinyllysine is present on residues lysine 7 and lysine 11. The residue at position 16 (lysine 16) is an N6-acetyllysine; alternate. Lysine 16 carries the post-translational modification N6-succinyllysine; alternate. Position 24 is a phosphotyrosine (tyrosine 24). N6-succinyllysine is present on lysine 40. At serine 49 the chain carries Phosphoserine. Histidine 58 lines the O2 pocket. Heme b is bound at residue histidine 87. Serine 102 is subject to Phosphoserine. Residue threonine 108 is modified to Phosphothreonine. The residue at position 131 (serine 131) is a Phosphoserine. Phosphothreonine is present on residues threonine 134 and threonine 137. Phosphoserine is present on serine 138.

The protein belongs to the globin family. In terms of assembly, heterotetramer of two alpha chains and two beta chains. In terms of tissue distribution, red blood cells.

Functionally, involved in oxygen transport from the lung to the various peripheral tissues. Hemopressin acts as an antagonist peptide of the cannabinoid receptor CNR1. Hemopressin-binding efficiently blocks cannabinoid receptor CNR1 and subsequent signaling. The protein is Hemoglobin subunit alpha (HBA) of Crocuta crocuta (Spotted hyena).